The primary structure comprises 265 residues: Energy-coupling factor transporter transmembrane protein EcfT (265 aa).

The next 5 membrane-spanning stretches (helical) occupy residues 29-49 (IILF…AILI), 73-93 (VWIL…GGTV), 110-130 (AIFI…LTLT), 143-163 (LLGP…MMSI), and 242-262 (FTWR…VIGW).

It belongs to the energy-coupling factor EcfT family. As to quaternary structure, forms a stable energy-coupling factor (ECF) transporter complex composed of 2 membrane-embedded substrate-binding proteins (S component), 2 ATP-binding proteins (A component) and 2 transmembrane proteins (T component). May be able to interact with more than 1 S component at a time.

Its subcellular location is the cell membrane. Its function is as follows. Transmembrane (T) component of an energy-coupling factor (ECF) ABC-transporter complex. Unlike classic ABC transporters this ECF transporter provides the energy necessary to transport a number of different substrates. The chain is Energy-coupling factor transporter transmembrane protein EcfT from Brevibacillus brevis (strain 47 / JCM 6285 / NBRC 100599).